We begin with the raw amino-acid sequence, 273 residues long: Peptidoglycan-N-acetylglucosamine deacetylase BC_1974 (273 aa).

The helical transmembrane segment at 10-30 threads the bilayer; the sequence is IVVVLIAIAAVAIGYYMFQSI. Residues 69–255 form the NodB homology domain; sequence KVAYLTFDDG…GLKEKGYEFE (187 aa). The active-site Proton acceptor is the Asp76. Zn(2+) is bound by residues Asp77, His126, and His130. Catalysis depends on His230, which acts as the Proton donor.

The protein belongs to the polysaccharide deacetylase family. Zn(2+) serves as cofactor. Requires Co(2+) as cofactor. The cofactor is Ni(2+).

Its subcellular location is the cell membrane. It carries out the reaction peptidoglycan-N-acetyl-D-glucosamine + H2O = peptidoglycan-D-glucosamine + acetate.. Inhibited by the hydroxamate N-hydroxy-4-(naphthalene-1-yl)benzamide (NHNB). Its function is as follows. Catalyzes the deacetylation of N-acetylglucosamine (GlcNAc) residues in peptidoglycan. The polypeptide is Peptidoglycan-N-acetylglucosamine deacetylase BC_1974 (Bacillus cereus (strain ATCC 14579 / DSM 31 / CCUG 7414 / JCM 2152 / NBRC 15305 / NCIMB 9373 / NCTC 2599 / NRRL B-3711)).